Here is a 228-residue protein sequence, read N- to C-terminus: uncharacterized protein (228 aa).

The protein to E.coli YbfG.

This is an uncharacterized protein from Haemophilus influenzae (strain ATCC 51907 / DSM 11121 / KW20 / Rd).